Reading from the N-terminus, the 209-residue chain is MADS-box transcription factor 2 (209 aa).

Residues 1–61 (MGRGKIEIKR…GKLYDYCSPK (61 aa)) enclose the MADS-box domain. The 87-residue stretch at 84-170 (HKSLSAEIDR…AFKLHQQDIA (87 aa)) folds into the K-box domain.

In terms of tissue distribution, highly expressed in anthers and carpels. Expressed in pollen, tapetum and stigma.

Its subcellular location is the nucleus. Its function is as follows. Probable transcription factor involved in the development of floral organs. B-class protein required for normal development of lodicules (whorl 2). This chain is MADS-box transcription factor 2 (MADS2), found in Oryza sativa subsp. japonica (Rice).